A 146-amino-acid polypeptide reads, in one-letter code: GFLTAEEKGLVNGLWGKVNVDEVGGEALGRLLVVYPWTQRFFESFGDLSSADAIMSNAKVKAHGKKVLNSFSDGLKNIDDLKGAFAKLSELHCDKLHVDPENFRLLGNVLVCVLAHHFGHDFNPQVQAAFQKVVAGVANALAHKYH.

Gly-1 is subject to N-acetylserine; in variant beta-B. The Globin domain occupies Phe-2–His-146. Position 44 is a phosphoserine (Ser-44). N6-acetyllysine is present on Lys-59. His-63 lines the heme b pocket. The residue at position 82 (Lys-82) is an N6-acetyllysine. His-92 serves as a coordination point for heme b. The residue at position 93 (Cys-93) is an S-nitrosocysteine. Lys-144 bears the N6-acetyllysine mark.

It belongs to the globin family. In terms of assembly, heterotetramer of two alpha chains and two beta chains. Red blood cells.

Its function is as follows. Involved in oxygen transport from the lung to the various peripheral tissues. This Felis catus (Cat) protein is Hemoglobin subunit beta-A/B (HBB).